The primary structure comprises 99 residues: Osteocalcin (99 aa).

A signal peptide spans 1–23; it reads MRTLSLLTLLALTAFCLSDLAGA. A propeptide spanning residues 24-49 is cleaved from the precursor; it reads KPSDSESDKAFMSKQEGSKVVNRLRR. One can recognise a Gla domain in the interval 50–96; the sequence is YLNNGLGAPAPYPDPLEPHREVCELNPNCDELADHIGFQDAYKRIYG. Position 58 is a hydroxyproline (Pro-58). Residues Glu-66, Glu-70, Glu-73, and Asp-79 each contribute to the Ca(2+) site. 3 positions are modified to 4-carboxyglutamate: Glu-66, Glu-70, and Glu-73. A disulfide bridge connects residues Cys-72 and Cys-78.

The protein belongs to the osteocalcin/matrix Gla protein family. Gamma-carboxyglutamate residues are formed by vitamin K dependent carboxylation by GGCX. These residues are essential for the binding of calcium. Decarboxylation promotes the hormone activity.

The protein resides in the secreted. In terms of biological role, the carboxylated form is one of the main organic components of the bone matrix, which constitutes 1-2% of the total bone protein: it acts as a negative regulator of bone formation and is required to limit bone formation without impairing bone resorption or mineralization. The carboxylated form binds strongly to apatite and calcium. Functionally, the uncarboxylated form acts as a hormone secreted by osteoblasts, which regulates different cellular processes, such as energy metabolism, male fertility and brain development. Regulates of energy metabolism by acting as a hormone favoring pancreatic beta-cell proliferation, insulin secretion and sensitivity and energy expenditure. Uncarboxylated osteocalcin hormone also promotes testosterone production in the testes: acts as a ligand for G protein-coupled receptor GPRC6A at the surface of Leydig cells, initiating a signaling response that promotes the expression of enzymes required for testosterone synthesis in a CREB-dependent manner. Also acts as a regulator of brain development: osteocalcin hormone crosses the blood-brain barrier and acts as a ligand for GPR158 on neurons, initiating a signaling response that prevents neuronal apoptosis in the hippocampus, favors the synthesis of all monoamine neurotransmitters and inhibits that of gamma-aminobutyric acid (GABA). Osteocalcin also crosses the placenta during pregnancy and maternal osteocalcin is required for fetal brain development. This chain is Osteocalcin (Bglap), found in Rattus norvegicus (Rat).